The chain runs to 1734 residues: Complement C4-A (1734 aa).

The first 19 residues, methionine 1–glutamine 19, serve as a signal peptide directing secretion. The cysteines at positions 66 and 95 are disulfide-linked. Residue asparagine 224 is glycosylated (N-linked (GlcNAc...) asparagine). Cysteine 633 and cysteine 667 are joined by a disulfide. Residues arginine 674–arginine 677 constitute a propeptide that is removed on maturation. Cystine bridges form between cysteine 700–cysteine 726, cysteine 701–cysteine 733, and cysteine 714–cysteine 734. Positions cysteine 700–cysteine 734 constitute an Anaphylatoxin-like domain. N-linked (GlcNAc...) asparagine glycans are attached at residues asparagine 743 and asparagine 859. The isoglutamyl cysteine thioester (Cys-Gln) cross-link spans cysteine 1002–glutamine 1005. 2 N-linked (GlcNAc...) asparagine glycosylation sites follow: asparagine 1128 and asparagine 1383. Tyrosine 1409 carries the sulfotyrosine modification. Positions arginine 1437–arginine 1443 are excised as a propeptide. 5 cysteine pairs are disulfide-bonded: cysteine 1461–cysteine 1525, cysteine 1573–cysteine 1578, cysteine 1585–cysteine 1663, cysteine 1608–cysteine 1732, and cysteine 1708–cysteine 1717. Residues cysteine 1585–cysteine 1732 enclose the NTR domain.

In terms of assembly, in absence of complement activation, circulates in blood as a disulfide-linked trimer of an alpha, beta and gamma chain. As to quaternary structure, complement C4b is composed of Complement C4b-A, Complement C4 beta and Complement C4 gamma chains that are associated via disulfide bonds. Non-enzymatic component of the C3 convertase, also named C4bC2b, composed of the serine protease complement C2b (C2), as well as complement C4b. Non-enzymatic component of the C5 convertase, also named C4bC2bC3b, composed of the serine protease complement C2b (C2), complement C3b, as well as complement C4b. Prior to secretion, the single-chain precursor is enzymatically cleaved by plasminogen (PLG) to yield non-identical chains alpha, beta and gamma. During activation of the complement systems, the alpha chain is cleaved into C4a and C4b by different proteases depending on the complement pathway: C4b stays linked to the beta and gamma chains, while C4a is released in the plasma. The alpha chain is cleaved by C1S to generate C4a and C4b following activation by the classical complement system. The alpha chain is cleaved to generate C4a and C4b by MASP2 following activation by the lectin complement system. The alpha chain is cleaved by GZMK to generate C4a and C4b following activation by the GZMK complement system. Further degradation of C4b by C1 into the inactive fragments C4c and C4d blocks the generation of C3 convertase. The proteolytic cleavages often are incomplete so that many structural forms can be found in plasma. Post-translationally, upon activation, the internal thioester bond reacts with carbohydrate antigens on the target surface to form amide or ester bonds, leading to covalent association with the surface of pathogens. In terms of processing, complement C4b interacts with complement C3b via a thioester linkage. N- and O-glycosylated. O-glycosylated with a core 1 or possibly core 8 glycan.

It is found in the secreted. The protein localises to the synapse. Its subcellular location is the cell projection. The protein resides in the axon. It localises to the dendrite. It is found in the cell surface. With respect to regulation, specifically inhibited by nanobody hC4Nb8, inhibiting the classical complement pathway. Its function is as follows. Precursor of non-enzymatic components of the classical, lectin and GZMK complement pathways, which consist in a cascade of proteins that leads to phagocytosis and breakdown of pathogens and signaling that strengthens the adaptive immune system. In terms of biological role, non-enzymatic component of C3 and C5 convertases. Generated following cleavage by complement proteases (C1S, MASP2 or GZMK, depending on the complement pathway), it covalently attaches to the surface of pathogens, where it acts as an opsonin that marks the surface of antigens for removal. It then recruits the serine protease complement C2b to form the C3 and C5 convertases, which cleave and activate C3 and C5, respectively, the next components of the complement pathways. Complement C4b-A isotype is responsible for effective binding to form amide bonds with immune aggregates or protein antigens, while complement C4b-B isotype catalyzes the transacylation of the thioester carbonyl group to form ester bonds with carbohydrate antigens. Functionally, putative humoral mediator released following cleavage by complement proteases (C1S, MASP2 or GZMK, depending on the complement pathway). While it is strongly similar to anaphylatoxins, its role is unclear. Was reported to act as a mediator of local inflammatory process; however these effects were probably due to contamination with C3a and/C5a anaphylatoxins in biological assays. The sequence is that of Complement C4-A from Mus musculus (Mouse).